Here is a 380-residue protein sequence, read N- to C-terminus: cAMP-dependent protein kinase type I-alpha regulatory subunit (380 aa).

Met1 carries the N-acetylmethionine modification. Position 2 is an N-acetylalanine; in cAMP-dependent protein kinase type I-alpha regulatory subunit, N-terminally processed (Ala2). A dimerization and phosphorylation region spans residues 2–135 (ASGSTASEEE…ALAKAIEKNV (134 aa)). Ser3, Ser76, and Ser82 each carry phosphoserine. The interval 64–96 (IQNLQKASARADSREDEISPPPPNPVVKGRRRR) is disordered. A Pseudophosphorylation motif motif is present at residues 95-99 (RRGAI). Ser100 is subject to Phosphoserine. 3',5'-cyclic AMP contacts are provided by residues 136–253 (LFSH…SKVS), Glu201, Arg210, 254–380 (ILES…SLSV), Glu325, and Arg334. Residue Ser257 is modified to Phosphoserine.

Belongs to the cAMP-dependent kinase regulatory chain family. As to quaternary structure, the inactive holoenzyme is composed of two regulatory chains and two catalytic chains. Activation by cAMP releases the two active catalytic monomers and the regulatory dimer. Interacts with PRKACA and PRKACB. PRKAR1A also interacts with RFC2; the complex may be involved in cell survival. Interacts with AKAP4. Interacts with RARA; the interaction occurs in the presence of cAMP or FSH and regulates RARA transcriptional activity. Interacts with the phosphorylated form of PJA2. Interacts with CBFA2T3. Interacts with PRKX; regulates this cAMP-dependent protein kinase. Interacts with smAKAP; this interaction may target PRKAR1A to the plasma membrane. Interacts with AICDA. Post-translationally, the pseudophosphorylation site binds to the substrate-binding region of the catalytic chain, resulting in the inhibition of its activity. Four types of regulatory chains are found: I-alpha, I-beta, II-alpha, and II-beta. Their expression varies among tissues and is in some cases constitutive and in others inducible.

Its subcellular location is the cell membrane. Functionally, regulatory subunit of the cAMP-dependent protein kinases involved in cAMP signaling in cells. This chain is cAMP-dependent protein kinase type I-alpha regulatory subunit (PRKAR1A), found in Sus scrofa (Pig).